Here is an 800-residue protein sequence, read N- to C-terminus: Protein translocase subunit SecA (800 aa).

ATP contacts are provided by residues Q85, 103–107 (GEGKT), and D504.

Belongs to the SecA family. Monomer and homodimer. Part of the essential Sec protein translocation apparatus which comprises SecA, SecYEG and auxiliary proteins SecDF. Other proteins may also be involved.

It localises to the cell membrane. The protein resides in the cytoplasm. It catalyses the reaction ATP + H2O + cellular proteinSide 1 = ADP + phosphate + cellular proteinSide 2.. Functionally, part of the Sec protein translocase complex. Interacts with the SecYEG preprotein conducting channel. Has a central role in coupling the hydrolysis of ATP to the transfer of proteins into and across the cell membrane, serving as an ATP-driven molecular motor driving the stepwise translocation of polypeptide chains across the membrane. In Lactobacillus delbrueckii subsp. bulgaricus (strain ATCC 11842 / DSM 20081 / BCRC 10696 / JCM 1002 / NBRC 13953 / NCIMB 11778 / NCTC 12712 / WDCM 00102 / Lb 14), this protein is Protein translocase subunit SecA.